We begin with the raw amino-acid sequence, 744 residues long: Collagen alpha-1(VIII) chain (744 aa).

The first 27 residues, 1 to 27 (MAVQPGPPQLLQVLLTISLGSIRLIQA), serve as a signal peptide directing secretion. Residues 29 to 117 (AYYGIKPLPP…GKEIPLASLR (89 aa)) form a nonhelical region (NC2) region. A compositionally biased stretch (basic and acidic residues) spans 101–110 (KEAVPKKGKE). 2 disordered regions span residues 101-434 (KEAV…PGLQ) and 463-584 (EAGH…QGEY). The tract at residues 118–571 (GEQGPRGEPG…PGPPGPPGPP (454 aa)) is triple-helical region. The segment covering 128-137 (PRGPPGPPGL) has biased composition (pro residues). The span at 168–190 (KPGAMGMPGAKGEIGPKGEIGPM) shows a compositional bias: low complexity. The span at 203–217 (GLPGIGKPGGPGLPG) shows a compositional bias: gly residues. Over residues 288-298 (KPGPPGEPGPQ) the composition is skewed to pro residues. The segment covering 328–337 (GFPGGKGEQG) has biased composition (gly residues). Over residues 389-403 (PGEPGLPGIPGPMGP) the composition is skewed to pro residues. A compositionally biased stretch (gly residues) spans 411 to 420 (GPKGEGGIVG). 2 stretches are compositionally biased toward low complexity: residues 469 to 506 (LPGL…TGPS) and 540 to 556 (LHGP…QGQP). The span at 558–579 (LPGPPGPPGPPGPPAVMPPTPA) shows a compositional bias: pro residues. The nonhelical region (NC1) stretch occupies residues 572–744 (AVMPPTPAPQ…SFSGYLLYPM (173 aa)). The C1q domain maps to 611–744 (PAYEMPAFTA…SFSGYLLYPM (134 aa)).

In terms of assembly, homotrimers, or heterotrimers in association with alpha 2(VIII) type collagens. Four homotrimers can form a tetrahedron stabilized by central interacting C-terminal NC1 trimers. Post-translationally, prolines at the third position of the tripeptide repeating unit (G-X-Y) are hydroxylated in some or all of the chains.

The protein resides in the secreted. Its subcellular location is the extracellular space. The protein localises to the extracellular matrix. It is found in the basement membrane. In terms of biological role, macromolecular component of the subendothelium. Major component of the Descemet's membrane (basement membrane) of corneal endothelial cells. Also a component of the endothelia of blood vessels. Necessary for migration and proliferation of vascular smooth muscle cells and thus, has a potential role in the maintenance of vessel wall integrity and structure, in particular in atherogenesis. The polypeptide is Collagen alpha-1(VIII) chain (COL8A1) (Gallus gallus (Chicken)).